We begin with the raw amino-acid sequence, 43 residues long: Potassium channel toxin gamma-KTx 4.8 (43 aa).

Intrachain disulfides connect Cys5–Cys23, Cys11–Cys34, Cys20–Cys39, and Cys24–Cys41.

Belongs to the ergtoxin family. Gamma-KTx 4 subfamily. In terms of tissue distribution, expressed by the venom gland.

It is found in the secreted. Functionally, reversibly blocks Kv11/ERG potassium channels. The polypeptide is Potassium channel toxin gamma-KTx 4.8 (Centruroides elegans (Bark scorpion)).